The primary structure comprises 534 residues: Chaperonin GroEL, chloroplastic (534 aa).

ATP-binding positions include 29 to 32 (TLGP), 86 to 90 (DGTTT), Gly414, and Asp496.

This sequence belongs to the chaperonin (HSP60) family. In terms of assembly, forms a cylinder of 14 subunits composed of two heptameric rings stacked back-to-back. Interacts with the co-chaperonin GroES.

The protein localises to the plastid. The protein resides in the chloroplast. It catalyses the reaction ATP + H2O + a folded polypeptide = ADP + phosphate + an unfolded polypeptide.. In terms of biological role, together with its co-chaperonin GroES, plays an essential role in assisting protein folding. The GroEL-GroES system forms a nano-cage that allows encapsulation of the non-native substrate proteins and provides a physical environment optimized to promote and accelerate protein folding. This Galdieria sulphuraria (Red alga) protein is Chaperonin GroEL, chloroplastic.